A 296-amino-acid chain; its full sequence is UDP-N-acetylglucosamine transporter TMEM241 (296 aa).

The next 10 helical transmembrane spans lie at L7–V29, F32–V52, S67–S87, L93–Q113, T121–F141, F146–I166, I187–L207, F211–L231, W250–L270, and T271–S291.

Belongs to the nucleotide-sugar transporter family. SLC35A subfamily.

It localises to the golgi apparatus. It is found in the cis-Golgi network membrane. Functionally, golgi-localized UDP-N-acetylglucosamine (UDP-GlcNAc) transporter that transports UDP-N-acetylglucosamine into Golgi lumen. Contributes to lysosomal targeting of NPC2, a key protein required for lysosomal cholesterol exiting, and that utilizes the mannose-6-phosphate (M6P) modification pathway for its lysosomal targeting. This is UDP-N-acetylglucosamine transporter TMEM241 from Homo sapiens (Human).